Consider the following 153-residue polypeptide: D-aminoacyl-tRNA deacylase (153 aa).

Positions 137-138 (GP) match the Gly-cisPro motif, important for rejection of L-amino acids motif.

The protein belongs to the DTD family. As to quaternary structure, homodimer.

It localises to the cytoplasm. It catalyses the reaction glycyl-tRNA(Ala) + H2O = tRNA(Ala) + glycine + H(+). The enzyme catalyses a D-aminoacyl-tRNA + H2O = a tRNA + a D-alpha-amino acid + H(+). Functionally, an aminoacyl-tRNA editing enzyme that deacylates mischarged D-aminoacyl-tRNAs. Also deacylates mischarged glycyl-tRNA(Ala), protecting cells against glycine mischarging by AlaRS. Acts via tRNA-based rather than protein-based catalysis; rejects L-amino acids rather than detecting D-amino acids in the active site. By recycling D-aminoacyl-tRNA to D-amino acids and free tRNA molecules, this enzyme counteracts the toxicity associated with the formation of D-aminoacyl-tRNA entities in vivo and helps enforce protein L-homochirality. This chain is D-aminoacyl-tRNA deacylase, found in Myxococcus xanthus (strain DK1622).